The sequence spans 1248 residues: Period circadian protein homolog 2 (1248 aa).

A disordered region spans residues 1–57; it reads MNGYVEFSPSPTKESVEPQPSQAVLQEDVDMSSGSSGHENCSMGRDSQGSDCDDNGK. Composition is skewed to polar residues over residues 9–24 and 32–50; these read PSPT…SQAV and SSGS…SQGS. The Nuclear export signal 1 motif lies at 105–114; it reads LIRTLRELKV. The PAS 1 domain occupies 175–242; sequence ITSEYIVKNA…FHSYTTPYKL (68 aa). Residues 302-306 carry the LXXLL motif; it reads LCCLL. Residues 315-381 form the PAS 2 domain; it reads YEAPRIPPEK…MLAIHKKILQ (67 aa). In terms of domain architecture, PAC spans 389–432; that stretch reads YSPIRFRARNGEYITLDTSWSSFINPWSRKISFIIGRHKVRVGP. The Nuclear export signal 2 signature appears at 456 to 465; that stretch reads LTEQIHRLLM. Disordered stretches follow at residues 467–563 and 619–638; these read PVPH…SLPK and VSPG…VSSH. An important for protein stability region spans residues 474 to 478; that stretch reads SGYGS. Positions 506-706 are CSNK1E binding domain; that stretch reads RKSGISKNGS…GAPGGLSQEK (201 aa). Polar residues predominate over residues 510–521; the sequence is ISKNGSKTQTRS. Phosphoserine occurs at positions 521, 524, 527, and 540. Residues 523–534 show a composition bias toward basic and acidic residues; sequence FSHESGEQKEIA. A phosphoserine mark is found at Ser-656, Ser-690, Ser-694, Ser-703, and Ser-755. Disordered stretches follow at residues 675 to 708 and 751 to 829; these read DKKP…EKGP and RAQA…PSAP. The Nuclear localization signal signature appears at 773–789; it reads KKTGKNRKLKSKRVKTR. Residues 774-787 are compositionally biased toward basic residues; it reads KTGKNRKLKSKRVK. The span at 816–827 shows a compositional bias: low complexity; that stretch reads SPSDTSQSSCPS. Residues 873-1058 form an interaction with PPARG region; sequence DFAVQPLPLA…DLCSATGSAL (186 aa). At Ser-930 the chain carries Phosphoserine. Residues 950 to 971 form a disordered region; the sequence is TPPAATVTSGRASPPLFQSRGS. Thr-955 is modified (phosphothreonine). Ser-962 is subject to Phosphoserine. The Nuclear export signal 3 signature appears at 974-981; it reads LQLNLLQL. Residues 984 to 1035 are disordered; it reads APEGSTGAAGTSGTTGTAAAGLDCTPGTSRDRQPKAPSTCKEPSDTQNSDAL. Positions 987–1004 are enriched in low complexity; the sequence is GSTGAAGTSGTTGTAAAG. The LXXLL signature appears at 1042–1046; that stretch reads LNLLL. The span at 1057–1080 shows a compositional bias: low complexity; it reads ALSGSGASATSDSLGSGSLGCDAS. The interval 1057-1113 is disordered; it reads ALSGSGASATSDSLGSGSLGCDASRSGAGSSDTSHTSKYFGSIDSSENNHKAKVSTD. Polar residues predominate over residues 1083 to 1102; it reads GAGSSDTSHTSKYFGSIDSS. Residues 1103–1112 show a composition bias toward basic and acidic residues; the sequence is ENNHKAKVST. The residue at position 1117 (Ser-1117) is a Phosphoserine. The interval 1148-1248 is CRY binding domain; that stretch reads SRDLESVLRE…LTGPRIEAQT (101 aa). Residues 1215-1248 form a disordered region; the sequence is PYEEDSPSPGLCDTSEAKEEEGEQLTGPRIEAQT.

As to quaternary structure, homodimer. Component of the circadian core oscillator, which includes the CRY proteins, CLOCK or NPAS2, BMAL1 or BMAL2, CSNK1D and/or CSNK1E, TIMELESS, and the PER proteins. Interacts with CLOCK-BMAL1 (off DNA). Interacts with BMAL2. Interacts directly with PER1 and PER3, and through a C-terminal domain, with CRY1 and CRY2. Interacts (via PAS 2 domain) with TIMELESS. Interacts with NFIL3. Different large complexes have been identified with different repressive functions. The core of PER complexes is composed of at least PER1, PER2, PER3, CRY1, CRY2, CSNK1D and/or CSNK1E. The large PER complex involved in the repression of transcriptional termination is composed of at least PER2, CDK9, DDX5, DHX9, NCBP1 and POLR2A (active). The large PER complex involved in the histone deacetylation is composed of at least HDAC1, PER2, SFPQ and SIN3A. The large PER complex involved in the histone methylation is composed of at least PER2, CBX3, TRIM28, SUV39H1 and/or SUV39H2; CBX3 mediates the formation of the complex. Interacts with SETX; the interaction inhibits termination of circadian target genes. Interacts with the nuclear receptors HNF4A, NR1D1, NR4A2, RORA, PPARA, PPARG and THRA; the interaction with at least PPARG is ligand dependent. Interacts with PML. Interacts (phosphorylated) with BTRC and FBXW11; the interactions trigger proteasomal degradation. Interacts with NONO and SFPQ. Interacts with PRKCDBP. Interacts with MAGEL2. Interacts with MAP1LC3B. Interacts with HNF4A. Post-translationally, acetylated. Deacetylated by SIRT1, resulting in decreased protein stability. Deacetylated by SIRT6, preventing its degradation by the proteasome, resulting in increased protein stability. In terms of processing, phosphorylated by CSNK1E and CSNK1D. Phosphorylation results in PER2 protein degradation. May be dephosphorylated by PP1. Ubiquitinated, leading to its proteasomal degradation. Ubiquitination may be inhibited by CRY1. In terms of tissue distribution, expressed in the brain, mainly in the suprachiasmatic nucleus (SCN). Expression also found in the harderian gland, lung, eye, intestine, liver and skeletal muscle.

Its subcellular location is the nucleus. It localises to the cytoplasm. The protein localises to the perinuclear region. In terms of biological role, transcriptional repressor which forms a core component of the circadian clock. The circadian clock, an internal time-keeping system, regulates various physiological processes through the generation of approximately 24 hour circadian rhythms in gene expression, which are translated into rhythms in metabolism and behavior. It is derived from the Latin roots 'circa' (about) and 'diem' (day) and acts as an important regulator of a wide array of physiological functions including metabolism, sleep, body temperature, blood pressure, endocrine, immune, cardiovascular, and renal function. Consists of two major components: the central clock, residing in the suprachiasmatic nucleus (SCN) of the brain, and the peripheral clocks that are present in nearly every tissue and organ system. Both the central and peripheral clocks can be reset by environmental cues, also known as Zeitgebers (German for 'timegivers'). The predominant Zeitgeber for the central clock is light, which is sensed by retina and signals directly to the SCN. The central clock entrains the peripheral clocks through neuronal and hormonal signals, body temperature and feeding-related cues, aligning all clocks with the external light/dark cycle. Circadian rhythms allow an organism to achieve temporal homeostasis with its environment at the molecular level by regulating gene expression to create a peak of protein expression once every 24 hours to control when a particular physiological process is most active with respect to the solar day. Transcription and translation of core clock components (CLOCK, NPAS2, BMAL1, BMAL2, PER1, PER2, PER3, CRY1 and CRY2) plays a critical role in rhythm generation, whereas delays imposed by post-translational modifications (PTMs) are important for determining the period (tau) of the rhythms (tau refers to the period of a rhythm and is the length, in time, of one complete cycle). A diurnal rhythm is synchronized with the day/night cycle, while the ultradian and infradian rhythms have a period shorter and longer than 24 hours, respectively. Disruptions in the circadian rhythms contribute to the pathology of cardiovascular diseases, cancer, metabolic syndrome and aging. A transcription/translation feedback loop (TTFL) forms the core of the molecular circadian clock mechanism. Transcription factors, CLOCK or NPAS2 and BMAL1 or BMAL2, form the positive limb of the feedback loop, act in the form of a heterodimer and activate the transcription of core clock genes and clock-controlled genes (involved in key metabolic processes), harboring E-box elements (5'-CACGTG-3') within their promoters. The core clock genes: PER1/2/3 and CRY1/2 which are transcriptional repressors form the negative limb of the feedback loop and interact with the CLOCK|NPAS2-BMAL1|BMAL2 heterodimer inhibiting its activity and thereby negatively regulating their own expression. This heterodimer also activates nuclear receptors NR1D1/2 and RORA/B/G, which form a second feedback loop and which activate and repress BMAL1 transcription, respectively. PER1 and PER2 proteins transport CRY1 and CRY2 into the nucleus with appropriate circadian timing, but also contribute directly to repression of clock-controlled target genes through interaction with several classes of RNA-binding proteins, helicases and others transcriptional repressors. PER appears to regulate circadian control of transcription by at least three different modes. First, interacts directly with the CLOCK-BMAL1 at the tail end of the nascent transcript peak to recruit complexes containing the SIN3-HDAC that remodel chromatin to repress transcription. Second, brings H3K9 methyltransferases such as SUV39H1 and SUV39H2 to the E-box elements of the circadian target genes, like PER2 itself or PER1. The recruitment of each repressive modifier to the DNA seems to be very precisely temporally orchestrated by the large PER complex, the deacetylases acting before than the methyltransferases. Additionally, large PER complexes are also recruited to the target genes 3' termination site through interactions with RNA-binding proteins and helicases that may play a role in transcription termination to regulate transcription independently of CLOCK-BMAL1 interactions. Recruitment of large PER complexes to the elongating polymerase at PER and CRY termination sites inhibited SETX action, impeding RNA polymerase II release and thereby repressing transcriptional reinitiation. May propagate clock information to metabolic pathways via the interaction with nuclear receptors. Coactivator of PPARA and corepressor of NR1D1, binds rhythmically at the promoter of nuclear receptors target genes like BMAL1 or G6PC1. Directly and specifically represses PPARG proadipogenic activity by blocking PPARG recruitment to target promoters and thereby transcriptional activation. Required for fatty acid and lipid metabolism, is involved as well in the regulation of circulating insulin levels. Plays an important role in the maintenance of cardiovascular functions through the regulation of NO and vasodilatatory prostaglandins production in aortas. Controls circadian glutamate uptake in synaptic vesicles through the regulation of VGLUT1 expression. May also be involved in the regulation of inflammatory processes. Represses the CLOCK-BMAL1 induced transcription of BHLHE40/DEC1 and ATF4. Negatively regulates the formation of the TIMELESS-CRY1 complex by competing with TIMELESS for binding to CRY1. This is Period circadian protein homolog 2 (PER2) from Spalax judaei (Judean Mountains blind mole rat).